The sequence spans 294 residues: Very long chain fatty acid elongase 5 (294 aa).

7 consecutive transmembrane segments (helical) span residues 26–46 (WLLL…LLIV), 64–84 (ILVV…YELV), 112–132 (VLWW…FFIL), 141–161 (FLHI…MNWV), 172–192 (FNSF…IPAI), 207–227 (LVQF…PCGF), and 231–251 (WLYF…NFYI). The interval 261-294 (AKKDPRHNGIKSVNGHSNGASHTNAVKNRKARTD) is disordered. The segment covering 274-286 (NGHSNGASHTNAV) has biased composition (polar residues).

The protein belongs to the ELO family. ELOVL5 subfamily. As to expression, expression is highest in intestine, followed by brain and heart, and lowest in gill. Also expressed in liver, spleen and muscle.

The protein localises to the endoplasmic reticulum membrane. Its subcellular location is the cell projection. It localises to the dendrite. The catalysed reaction is a very-long-chain acyl-CoA + malonyl-CoA + H(+) = a very-long-chain 3-oxoacyl-CoA + CO2 + CoA. It catalyses the reaction (6Z,9Z,12Z)-octadecatrienoyl-CoA + malonyl-CoA + H(+) = (8Z,11Z,14Z)-3-oxoeicosatrienoyl-CoA + CO2 + CoA. It carries out the reaction (9Z,12Z,15Z)-octadecatrienoyl-CoA + malonyl-CoA + H(+) = (11Z,14Z,17Z)-3-oxoeicosatrienoyl-CoA + CO2 + CoA. The enzyme catalyses (9Z)-hexadecenoyl-CoA + malonyl-CoA + H(+) = 3-oxo-(11Z)-octadecenoyl-CoA + CO2 + CoA. The catalysed reaction is (9Z)-octadecenoyl-CoA + malonyl-CoA + H(+) = 3-oxo-(11Z)-eicosenoyl-CoA + CO2 + CoA. It catalyses the reaction (11Z)-octadecenoyl-CoA + malonyl-CoA + H(+) = 3-oxo-(13Z)-eicosenoyl-CoA + CO2 + CoA. It carries out the reaction (9Z,12Z)-octadecadienoyl-CoA + malonyl-CoA + H(+) = (11Z,14Z)-3-oxoicosa-11,14-dienoyl-CoA + CO2 + CoA. The enzyme catalyses (6Z,9Z,12Z,15Z)-octadecatetraenoyl-CoA + malonyl-CoA + H(+) = (8Z,11Z,14Z,17Z)-3-oxoicosatetraenoyl-CoA + CO2 + CoA. The catalysed reaction is (5Z,8Z,11Z,14Z)-eicosatetraenoyl-CoA + malonyl-CoA + H(+) = (7Z,10Z,13Z,16Z)-3-oxodocosatetraenoyl-CoA + CO2 + CoA. It catalyses the reaction (5Z,8Z,11Z,14Z,17Z)-eicosapentaenoyl-CoA + malonyl-CoA + H(+) = 3-oxo-(7Z,10Z,13Z,16Z,19Z)-docosapentaenoyl-CoA + CO2 + CoA. It participates in lipid metabolism; polyunsaturated fatty acid biosynthesis. Functionally, catalyzes the first and rate-limiting reaction of the four reactions that constitute the long-chain fatty acids elongation cycle. This endoplasmic reticulum-bound enzymatic process allows the addition of 2 carbons to the chain of long- and very long-chain fatty acids (VLCFAs) per cycle. Condensing enzyme that acts specifically toward polyunsaturated acyl-CoA with the higher activity toward C18:3(n-6) acyl-CoA. May participate in the production of monounsaturated and of polyunsaturated VLCFAs of different chain lengths that are involved in multiple biological processes as precursors of membrane lipids and lipid mediators. In conditions where the essential linoleic and alpha linoleic fatty acids are lacking it is also involved in the synthesis of Mead acid from oleic acid. This Tachysurus fulvidraco (Yellow catfish) protein is Very long chain fatty acid elongase 5.